The primary structure comprises 550 residues: MPPPRTGRGLLWLGLVLSSVCVALGSETQANSTTDALNVLLIIVDDLRPSLGCYGDKLVRSPNIDQLASHSLLFQNAFAQQAVCAPSRVSFLTGRRPDTTRLYDFNSYWRVHAGNFSTIPQYFKENGYVTMSVGKVFHPGISSNHTDDSPYSWSFPPYHPSSEKYENTKTCRGPDGELHANLLCPVDVLDVPEGTLPDKQSTEQAIQLLEKMKTSASPFFLAVGYHKPHIPFRYPKEFQKLYPLENITLAPDPEVPDGLPPVAYNPWMDIRQREDVQALNISVPYGPIPVDFQRKIRQSYFASVSYLDTQVGRLLSALDDLQLANSTIIAFTSDHGWALGEHGEWAKYSNFDVATHVPLIFYVPGRTASLPEAGEKLFPYLDPFDSASQLMEPGRQSMDLVELVSLFPTLAGLAGLQVPPRCPVPSFHVELCREGKNLLKHFRFRDLEEDPYLPGNPRELIAYSQYPRPSDIPQWNSDKPSLKDIKIMGYSIRTIDYRYTVWVGFNPDEFLANFSDIHAGELYFVDSDPLQDHNMYNDSQGGDLFQLLMP.

Residues 1–25 (MPPPRTGRGLLWLGLVLSSVCVALG) form the signal peptide. A propeptide spanning residues 26 to 33 (SETQANST) is cleaved from the precursor. 3 residues coordinate Ca(2+): Asp-45, Asp-46, and Cys-84. Cys-84 (nucleophile) is an active-site residue. The residue at position 84 (Cys-84) is a 3-oxoalanine (Cys). An N-linked (GlcNAc...) asparagine glycan is attached at Asn-115. The active site involves His-138. Asn-144 is a glycosylation site (N-linked (GlcNAc...) asparagine). Cysteines 171 and 184 form a disulfide. N-linked (GlcNAc...) asparagine glycans are attached at residues Asn-246, Asn-280, and Asn-325. The Ca(2+) site is built by Asp-334 and His-335. Cysteines 422 and 432 form a disulfide. N-linked (GlcNAc...) asparagine glycans are attached at residues Asn-513 and Asn-537.

It belongs to the sulfatase family. As to quaternary structure, monomer. The 58-kDa mature form is composed of two chains resulting from proteolitic processing, the 42-kDa chain and the 14-kDa chain that remain stably associated and form the 58-kDa intermediate form which is enzymatically active. Ca(2+) serves as cofactor. In terms of processing, synthesized as a 75-kDa precursor form in the endoplasmic reticulum (ER), and then processed by proteolytic cleavage through various intermediates to yield a 55-kDa mature form, with the release of an 18 kDa polypeptide. Post-translationally, the conversion to 3-oxoalanine (also known as C-formylglycine, FGly), of a serine or cysteine residue in prokaryotes and of a cysteine residue in eukaryotes, is critical for catalytic activity. In terms of tissue distribution, liver, kidney, lung, and placenta.

It is found in the lysosome. The enzyme catalyses Hydrolysis of the 2-sulfate groups of the L-iduronate 2-sulfate units of dermatan sulfate, heparan sulfate and heparin.. Its function is as follows. Lysosomal enzyme involved in the degradation pathway of dermatan sulfate and heparan sulfate. The chain is Iduronate 2-sulfatase (IDS) from Homo sapiens (Human).